The following is a 324-amino-acid chain: Polyprenol dehydrogenase (324 aa).

Residue Tyr206 is the Proton acceptor of the active site. NAD(+) is bound by residues Tyr206, Lys210, and Thr243.

Belongs to the short-chain dehydrogenases/reductases (SDR) family.

The protein localises to the lipid droplet. It carries out the reaction a di-trans,poly-cis-polyprenol + NAD(+) = a di-trans,poly-cis-polyprenal + NADH + H(+). The enzyme catalyses a di-trans,poly-cis-polyprenol + NADP(+) = a di-trans,poly-cis-polyprenal + NADPH + H(+). It catalyses the reaction a di-trans,poly-cis-dolichol + NADP(+) = a di-trans,poly-cis-dolichal + NADPH + H(+). The catalysed reaction is a di-trans,poly-cis-dolichol + NAD(+) = a di-trans,poly-cis-dolichal + NADH + H(+). It functions in the pathway protein modification; protein glycosylation. Functionally, oxidoreductase that plays a key role in early steps of protein N-linked glycosylation by mediating two non-consecutive steps in dolichol biosynthesis. Acts both as a NAD(+)-dependent dehydrogenase and as a NADPH-dependent reductase during the conversion of polyprenol into dolichol. First catalyzes the NAD(+)-dependent dehydrogenation of polyprenol into polyprenal; polyprenal is then reduced into dolichal by srd5a3. It then catalyzes the NADPH-dependent reduction of dolichal into dolichol. In Danio rerio (Zebrafish), this protein is Polyprenol dehydrogenase.